The following is a 391-amino-acid chain: Chaperone protein DnaJ (391 aa).

In terms of domain architecture, J spans 4-68 (DFYDVLGVSR…ETRQQYDQLG (65 aa)). A compositionally biased stretch (basic and acidic residues) spans 53-79 (DVLTDEETRQQYDQLGHERFEEAEKRG). 2 disordered regions span residues 53-94 (DVLT…MGGA) and 117-136 (FFGG…EQGR). Gly residues-rich tracts occupy residues 81-94 (TGNG…MGGA) and 119-129 (GGAGGGGGRGR). The CR-type zinc finger occupies 152–234 (GVSKQVTVRR…CGGQGQTRER (83 aa)). Zn(2+) contacts are provided by C165, C168, C182, C185, C208, C211, C222, and C225. CXXCXGXG motif repeat units follow at residues 165–172 (CADCGGSG), 182–189 (CPQCDGQG), 208–215 (CSRCGGEG), and 222–229 (CSTCGGQG).

Belongs to the DnaJ family. Homodimer. It depends on Zn(2+) as a cofactor.

Its subcellular location is the cytoplasm. Participates actively in the response to hyperosmotic and heat shock by preventing the aggregation of stress-denatured proteins and by disaggregating proteins, also in an autonomous, DnaK-independent fashion. Unfolded proteins bind initially to DnaJ; upon interaction with the DnaJ-bound protein, DnaK hydrolyzes its bound ATP, resulting in the formation of a stable complex. GrpE releases ADP from DnaK; ATP binding to DnaK triggers the release of the substrate protein, thus completing the reaction cycle. Several rounds of ATP-dependent interactions between DnaJ, DnaK and GrpE are required for fully efficient folding. Also involved, together with DnaK and GrpE, in the DNA replication of plasmids through activation of initiation proteins. The protein is Chaperone protein DnaJ of Halobacterium salinarum (strain ATCC 29341 / DSM 671 / R1).